Here is a 98-residue protein sequence, read N- to C-terminus: NADH-ubiquinone oxidoreductase chain 4L (98 aa).

3 consecutive transmembrane segments (helical) span residues 1-21, 29-49, and 61-81; these read MTLI…GLLM, ALLC…LTIL, and IILL…LVMV.

It belongs to the complex I subunit 4L family. As to quaternary structure, core subunit of respiratory chain NADH dehydrogenase (Complex I) which is composed of 45 different subunits.

Its subcellular location is the mitochondrion inner membrane. The enzyme catalyses a ubiquinone + NADH + 5 H(+)(in) = a ubiquinol + NAD(+) + 4 H(+)(out). Its function is as follows. Core subunit of the mitochondrial membrane respiratory chain NADH dehydrogenase (Complex I) which catalyzes electron transfer from NADH through the respiratory chain, using ubiquinone as an electron acceptor. Part of the enzyme membrane arm which is embedded in the lipid bilayer and involved in proton translocation. This chain is NADH-ubiquinone oxidoreductase chain 4L (MT-ND4L), found in Eschrichtius robustus (California gray whale).